We begin with the raw amino-acid sequence, 284 residues long: Protein phosphatase 1 regulatory subunit 3B (284 aa).

The PP1-binding motif signature appears at 61 to 64 (RVSF). The CBM21 domain maps to 124-232 (RNRLQTNHVC…SNKGKNYRIT (109 aa)). Ser260 is modified (phosphoserine).

In terms of assembly, interacts with glycogen, PPP1CC catalytic subunit of PP1 and PYGL. Associates with glycogen particles. Forms complexes with debranching enzyme, glycogen phosphorylase, glycogen synthase and phosphorylase kinase which is necessary for its regulation of PP1 activity. As to expression, highly expressed in liver (at protein level). Expressed predominantly in liver. Expressed moderately in heart. Expressed weakly in prostate, stomach, thyroid, lung, kidney, spleen and skeletal muscle.

Acts as a glycogen-targeting subunit for phosphatase PP1. Facilitates interaction of the PP1 with enzymes of the glycogen metabolism and regulates its activity. Suppresses the rate at which PP1 dephosphorylates (inactivates) glycogen phosphorylase and enhances the rate at which it activates glycogen synthase and therefore limits glycogen breakdown. Its activity is inhibited by PYGL, resulting in inhibition of the glycogen synthase and glycogen phosphorylase phosphatase activities of PP1. Dramatically increases basal and insulin-stimulated glycogen synthesis upon overexpression in hepatocytes. The chain is Protein phosphatase 1 regulatory subunit 3B (Ppp1r3b) from Mus musculus (Mouse).